A 262-amino-acid chain; its full sequence is Lysosomal-associated transmembrane protein 5 (262 aa).

5 consecutive transmembrane segments (helical) span residues 19–39 (IATT…FIEH), 64–84 (ISSF…LIGV), 92–112 (LLPF…TLLG), 134–154 (FPLM…LCSS), and 184–204 (FIKM…FKVY). Phosphotyrosine is present on tyrosine 259.

This sequence belongs to the LAPTM4/LAPTM5 transporter family. As to quaternary structure, binds to ubiquitin. Preferentially expressed in adult hematopoietic tissues. High levels in lymphoid and myeloid tissues. Highly expressed in peripheral blood leukocytes, thymus, spleen and lung, followed by placenta, liver and kidney.

The protein localises to the lysosome membrane. Functionally, may have a special functional role during embryogenesis and in adult hematopoietic cells. The polypeptide is Lysosomal-associated transmembrane protein 5 (LAPTM5) (Homo sapiens (Human)).